A 185-amino-acid polypeptide reads, in one-letter code: Peptide deformylase (185 aa).

Fe cation-binding residues include Cys-109 and His-152. The active site involves Glu-153. His-156 contributes to the Fe cation binding site.

Belongs to the polypeptide deformylase family. Fe(2+) serves as cofactor.

It carries out the reaction N-terminal N-formyl-L-methionyl-[peptide] + H2O = N-terminal L-methionyl-[peptide] + formate. In terms of biological role, removes the formyl group from the N-terminal Met of newly synthesized proteins. Requires at least a dipeptide for an efficient rate of reaction. N-terminal L-methionine is a prerequisite for activity but the enzyme has broad specificity at other positions. The sequence is that of Peptide deformylase from Roseiflexus sp. (strain RS-1).